A 122-amino-acid polypeptide reads, in one-letter code: NADPH-dependent 7-cyano-7-deazaguanine reductase (122 aa).

Cysteine 34 (thioimide intermediate) is an active-site residue. The active-site Proton donor is the aspartate 41. Substrate is bound by residues 56–58 and 75–76; these read VEL and HE.

Belongs to the GTP cyclohydrolase I family. QueF type 1 subfamily.

The protein resides in the cytoplasm. It carries out the reaction 7-aminomethyl-7-carbaguanine + 2 NADP(+) = 7-cyano-7-deazaguanine + 2 NADPH + 3 H(+). Its pathway is tRNA modification; tRNA-queuosine biosynthesis. Catalyzes the NADPH-dependent reduction of 7-cyano-7-deazaguanine (preQ0) to 7-aminomethyl-7-deazaguanine (preQ1). The sequence is that of NADPH-dependent 7-cyano-7-deazaguanine reductase from Anaeromyxobacter sp. (strain Fw109-5).